A 120-amino-acid chain; its full sequence is MASRKEALARRANRVRRHLKSVANGRPRLSVHRSSKNIYAQVIDDVAGKTLASASTLEKDLRGSLKTGADTAAATVVGKLLAERASKAGVTEVVFDRGAFIYHGRIKALAEAAREGGLTF.

Belongs to the universal ribosomal protein uL18 family. In terms of assembly, part of the 50S ribosomal subunit; part of the 5S rRNA/L5/L18/L25 subcomplex. Contacts the 5S and 23S rRNAs.

In terms of biological role, this is one of the proteins that bind and probably mediate the attachment of the 5S RNA into the large ribosomal subunit, where it forms part of the central protuberance. This chain is Large ribosomal subunit protein uL18, found in Rhizobium johnstonii (strain DSM 114642 / LMG 32736 / 3841) (Rhizobium leguminosarum bv. viciae).